We begin with the raw amino-acid sequence, 472 residues long: Mixed lineage kinase domain-like protein (472 aa).

Residues 1–143 (MDKLGQIIKL…QEDRQDAEED (143 aa)) form an N-terminal bundle and brace (NBB); mediates INSP6 binding region. Residues 61-81 (LGRFDEVLKEANQQIEKFSKK) are a coiled coil. At Ser124 the chain carries Phosphoserine. Positions 138–229 (QDAEEDGNEN…VFNNPQAESV (92 aa)) form a coiled coil. The Protein kinase domain occupies 192–456 (GPPWTKLKTS…DGRSLSGRER (265 aa)). Residues 198–206 (LKTSKMSTI) and Lys219 each bind ATP. A phosphoserine; by RIPK3 mark is found at Ser345 and Ser347. Thr349 is subject to Phosphothreonine; by RIPK3. Ser352 is modified (phosphoserine; by RIPK3).

It belongs to the protein kinase superfamily. As to quaternary structure, homooligomer. Homotrimer; forms homotrimers on necroptosis induction. Upon TNF-induced necrosis, forms in complex with PGAM5, RIPK1 and RIPK3. Within this complex, may play a role in the proper targeting of RIPK1-RIPK3 to its downstream effector PGAM5. Interacts with RIPK3; the interaction is direct and promotes its phosphorylation and subsequent activation. In terms of processing, phosphorylation by RIPK3 induces a conformational switch that is required for necroptosis. It also induces homotrimerization and localization to the plasma membrane. Highly expressed in thymus, colon, intestine, liver, spleen and lung. Expressed at much lower level in skeletal muscle, heart and kidney. Not detected in brain.

The protein resides in the cytoplasm. Its subcellular location is the cell membrane. It is found in the nucleus. With respect to regulation, activated via binding to highly phosphorylated inositol phosphates such as inositolhexakisphosphate (InsP6) which mediates the release of an N-terminal auto-inhibitory region. Activation requires not only RIPK3-dependent phosphorylation but also binding to highly phosphorylated inositol phosphates. In terms of biological role, pseudokinase that plays a key role in TNF-induced necroptosis, a programmed cell death process. Does not have protein kinase activity. Activated following phosphorylation by RIPK3, leading to homotrimerization, localization to the plasma membrane and execution of programmed necrosis characterized by calcium influx and plasma membrane damage. In addition to TNF-induced necroptosis, necroptosis can also take place in the nucleus in response to orthomyxoviruses infection: following ZBP1 activation, which senses double-stranded Z-RNA structures, nuclear RIPK3 catalyzes phosphorylation and activation of MLKL, promoting disruption of the nuclear envelope and leakage of cellular DNA into the cytosol. Binds to highly phosphorylated inositol phosphates such as inositolhexakisphosphate (InsP6) which is essential for its necroptotic function. The polypeptide is Mixed lineage kinase domain-like protein (Mus musculus (Mouse)).